Here is a 382-residue protein sequence, read N- to C-terminus: Galactokinase (382 aa).

Position 34 to 37 (34 to 37 (EHTD)) interacts with substrate. 124–130 (GAGLSSS) serves as a coordination point for ATP. Mg(2+)-binding residues include serine 130 and glutamate 162. The active-site Proton acceptor is the aspartate 174. Position 223 (tyrosine 223) interacts with substrate.

This sequence belongs to the GHMP kinase family. GalK subfamily.

The protein localises to the cytoplasm. The catalysed reaction is alpha-D-galactose + ATP = alpha-D-galactose 1-phosphate + ADP + H(+). The protein operates within carbohydrate metabolism; galactose metabolism. In terms of biological role, catalyzes the transfer of the gamma-phosphate of ATP to D-galactose to form alpha-D-galactose-1-phosphate (Gal-1-P). The protein is Galactokinase of Erwinia tasmaniensis (strain DSM 17950 / CFBP 7177 / CIP 109463 / NCPPB 4357 / Et1/99).